We begin with the raw amino-acid sequence, 149 residues long: Large ribosomal subunit protein eL19 (149 aa).

The segment covering 55 to 69 has biased composition (basic and acidic residues); the sequence is KGISSARKKEVQEQK. The interval 55–93 is disordered; that stretch reads KGISSARKKEVQEQKRKGKRKGPGSRRGAKGARTPKKEK. Over residues 70–88 the composition is skewed to basic residues; it reads RKGKRKGPGSRRGAKGART.

It belongs to the eukaryotic ribosomal protein eL19 family. Part of the 50S ribosomal subunit.

Its function is as follows. Binds to the 23S rRNA. The polypeptide is Large ribosomal subunit protein eL19 (Methanococcus vannielii).